Reading from the N-terminus, the 307-residue chain is Type 2A encapsulin shell protein (307 aa).

It belongs to the encapsulin family. Family 2A subfamily. As to quaternary structure, homooligomeric. The encapsulin nanocompartment is formed by 60 subunits; monomers form pentamers which assemble to form shells. There are 12 charged pores where the pentamers meet as well as 3-fold axis channels and dimer channels.

It localises to the encapsulin nanocompartment. Shell component of a type 2A encapsulin nanocompartment. Forms encapsulin nanocompartments about 24 nm in diameter from 60 monomers. Probably encapsulates at least cysteine desulfurase (CyD) and allows passage of cysteine into its interior, probably involved in sulfur metabolism. The sequence is that of Type 2A encapsulin shell protein from Mycobacterium avium.